Here is a 526-residue protein sequence, read N- to C-terminus: Nucleolar complex protein 4 homolog A (526 aa).

3 helical membrane passes run 307-327 (AAYDVGGAISLLALNGLFILI), 358-378 (FFHLANMFLSSTHLPVYLVAA), and 386-406 (LALTAPPQVLLMIIPFICNLI).

This sequence belongs to the CBF/MAK21 family.

The protein localises to the nucleus membrane. It is found in the nucleus. The protein resides in the nucleolus. The sequence is that of Nucleolar complex protein 4 homolog A (noc4l-a) from Xenopus laevis (African clawed frog).